The chain runs to 269 residues: 3-methyl-2-oxobutanoate hydroxymethyltransferase (269 aa).

Positions 43 and 82 each coordinate Mg(2+). 3-methyl-2-oxobutanoate contacts are provided by residues 43–44 (DS), D82, and K110. Position 112 (E112) interacts with Mg(2+). E179 serves as the catalytic Proton acceptor.

This sequence belongs to the PanB family. Homodecamer; pentamer of dimers. Mg(2+) serves as cofactor.

The protein resides in the cytoplasm. The catalysed reaction is 3-methyl-2-oxobutanoate + (6R)-5,10-methylene-5,6,7,8-tetrahydrofolate + H2O = 2-dehydropantoate + (6S)-5,6,7,8-tetrahydrofolate. The protein operates within cofactor biosynthesis; (R)-pantothenate biosynthesis; (R)-pantoate from 3-methyl-2-oxobutanoate: step 1/2. Catalyzes the reversible reaction in which hydroxymethyl group from 5,10-methylenetetrahydrofolate is transferred onto alpha-ketoisovalerate to form ketopantoate. This Acinetobacter baumannii (strain AB307-0294) protein is 3-methyl-2-oxobutanoate hydroxymethyltransferase.